The primary structure comprises 191 residues: Peptidyl-tRNA hydrolase (191 aa).

Tyrosine 14 is a tRNA binding site. Residue histidine 19 is the Proton acceptor of the active site. TRNA is bound by residues tyrosine 64, asparagine 66, and asparagine 112.

It belongs to the PTH family. Monomer.

Its subcellular location is the cytoplasm. It carries out the reaction an N-acyl-L-alpha-aminoacyl-tRNA + H2O = an N-acyl-L-amino acid + a tRNA + H(+). Hydrolyzes ribosome-free peptidyl-tRNAs (with 1 or more amino acids incorporated), which drop off the ribosome during protein synthesis, or as a result of ribosome stalling. Functionally, catalyzes the release of premature peptidyl moieties from peptidyl-tRNA molecules trapped in stalled 50S ribosomal subunits, and thus maintains levels of free tRNAs and 50S ribosomes. In Clostridium botulinum (strain Alaska E43 / Type E3), this protein is Peptidyl-tRNA hydrolase.